The following is a 363-amino-acid chain: Cytoskeleton protein RodZ (363 aa).

Over 1 to 111 (MNTEASQDQT…LGKKHKKRDG (111 aa)) the chain is Cytoplasmic. The 61-residue stretch at 19–79 (LRQARESLGL…KLVHLPEDEL (61 aa)) folds into the HTH cro/C1-type domain. Residues 30-49 (QQTVAERLCLKVSTIRDIEE) constitute a DNA-binding region (H-T-H motif). Residues 112–132 (WLMSFTWLIVLVVLGLTGAWW) form a helical; Signal-anchor for type II membrane protein membrane-spanning segment. Over 133-363 (WQNHQAQQAE…RVARLTVGVE (231 aa)) the chain is Periplasmic. The disordered stretch occupies residues 151–277 (SAQLSQNGGQ…PLPTADAGVS (127 aa)). Residues 188-199 (PLTNHSVSAITN) show a composition bias toward polar residues. Positions 200–225 (SAPTTSSVPTTSSATTSSVPTTSSVP) are enriched in low complexity. Over residues 226–243 (KINSTEPVDTANTNTTMH) the composition is skewed to polar residues. Residues 247 to 259 (AASAAVSPSQVPQ) show a composition bias toward low complexity.

It belongs to the RodZ family.

It is found in the cell inner membrane. Its function is as follows. Cytoskeletal protein that is involved in cell-shape control through regulation of the length of the long axis. The chain is Cytoskeleton protein RodZ from Yersinia pseudotuberculosis serotype O:1b (strain IP 31758).